The sequence spans 359 residues: DNA-directed RNA polymerase RPB3-11 homolog (359 aa).

In the N-terminal section; belongs to the archaeal RpoD/eukaryotic RPB3 RNA polymerase subunit family. The protein in the C-terminal section; belongs to the archaeal RpoL/eukaryotic RPB11/RPC19 RNA polymerase subunit family. Part of the viral DNA-directed RNA polymerase that consists of 8 polII-like subunits (RPB1, RPB2, RPB3, RPB5, RPB6, RPB7, RPB9, RPB10), a capping enzyme and a termination factor.

Its subcellular location is the host cytoplasm. It is found in the virion. Functionally, component of the DNA-directed RNA polymerase (RNAP) that catalyzes the transcription in the cytoplasm of viral DNA into RNA using the four ribonucleoside triphosphates as substrates. This Ornithodoros (relapsing fever ticks) protein is DNA-directed RNA polymerase RPB3-11 homolog.